Reading from the N-terminus, the 292-residue chain is MEMO1 family protein PF1638 (292 aa).

Belongs to the MEMO1 family.

This Pyrococcus furiosus (strain ATCC 43587 / DSM 3638 / JCM 8422 / Vc1) protein is MEMO1 family protein PF1638.